Reading from the N-terminus, the 724-residue chain is DNA ligase (724 aa).

NAD(+) contacts are provided by residues 44 to 48, 93 to 94, and Glu-127; these read DADYD and SL. Lys-129 functions as the N6-AMP-lysine intermediate in the catalytic mechanism. Residues Arg-150, Glu-186, Lys-307, and Lys-331 each coordinate NAD(+). Cys-437, Cys-440, Cys-461, and Cys-467 together coordinate Zn(2+). Positions 646-724 constitute a BRCT domain; that stretch reads TEGSPVAGKT…EDEWLALIGG (79 aa).

It belongs to the NAD-dependent DNA ligase family. LigA subfamily. It depends on Mg(2+) as a cofactor. Mn(2+) is required as a cofactor.

It carries out the reaction NAD(+) + (deoxyribonucleotide)n-3'-hydroxyl + 5'-phospho-(deoxyribonucleotide)m = (deoxyribonucleotide)n+m + AMP + beta-nicotinamide D-nucleotide.. In terms of biological role, DNA ligase that catalyzes the formation of phosphodiester linkages between 5'-phosphoryl and 3'-hydroxyl groups in double-stranded DNA using NAD as a coenzyme and as the energy source for the reaction. It is essential for DNA replication and repair of damaged DNA. The sequence is that of DNA ligase from Agrobacterium fabrum (strain C58 / ATCC 33970) (Agrobacterium tumefaciens (strain C58)).